A 26-amino-acid polypeptide reads, in one-letter code: Mitochondrial import receptor subunit TOM7-2 (26 aa).

The protein belongs to the Tom7 family. Forms part of the preprotein translocase complex of the outer mitochondrial membrane (TOM complex).

The protein localises to the mitochondrion outer membrane. Its function is as follows. Seems to act as a modulator of the dynamics of the mitochondrial protein transport machinery. Seems to promote the dissociation of subunits of the outer membrane translocase. The protein is Mitochondrial import receptor subunit TOM7-2 (TOM7-2) of Solanum tuberosum (Potato).